The sequence spans 205 residues: Type III pantothenate kinase (205 aa).

Residue 5–12 (DIGNTTYH) coordinates ATP. Substrate is bound by residues Tyr68 and 72–75 (GIDR). Residue Asp74 is the Proton acceptor of the active site. Asp89 lines the K(+) pocket. An ATP-binding site is contributed by Ser92. Substrate is bound at residue Ser144.

The protein belongs to the type III pantothenate kinase family. As to quaternary structure, homodimer. Requires NH4(+) as cofactor. K(+) is required as a cofactor.

It localises to the cytoplasm. It carries out the reaction (R)-pantothenate + ATP = (R)-4'-phosphopantothenate + ADP + H(+). Its pathway is cofactor biosynthesis; coenzyme A biosynthesis; CoA from (R)-pantothenate: step 1/5. In terms of biological role, catalyzes the phosphorylation of pantothenate (Pan), the first step in CoA biosynthesis. The sequence is that of Type III pantothenate kinase from Sulfurimonas denitrificans (strain ATCC 33889 / DSM 1251) (Thiomicrospira denitrificans (strain ATCC 33889 / DSM 1251)).